The sequence spans 380 residues: Queuine tRNA-ribosyltransferase (380 aa).

Asp96 functions as the Proton acceptor in the catalytic mechanism. Residues 96–100 (DSGGF), Asp150, Gln193, and Gly220 each bind substrate. Positions 251–257 (GVGAPDS) are RNA binding. Catalysis depends on Asp270, which acts as the Nucleophile. Residues 275 to 279 (TRIAR) form an RNA binding; important for wobble base 34 recognition region. Positions 308, 310, 313, and 339 each coordinate Zn(2+).

It belongs to the queuine tRNA-ribosyltransferase family. As to quaternary structure, homodimer. Within each dimer, one monomer is responsible for RNA recognition and catalysis, while the other monomer binds to the replacement base PreQ1. It depends on Zn(2+) as a cofactor.

The enzyme catalyses 7-aminomethyl-7-carbaguanine + guanosine(34) in tRNA = 7-aminomethyl-7-carbaguanosine(34) in tRNA + guanine. Its pathway is tRNA modification; tRNA-queuosine biosynthesis. Functionally, catalyzes the base-exchange of a guanine (G) residue with the queuine precursor 7-aminomethyl-7-deazaguanine (PreQ1) at position 34 (anticodon wobble position) in tRNAs with GU(N) anticodons (tRNA-Asp, -Asn, -His and -Tyr). Catalysis occurs through a double-displacement mechanism. The nucleophile active site attacks the C1' of nucleotide 34 to detach the guanine base from the RNA, forming a covalent enzyme-RNA intermediate. The proton acceptor active site deprotonates the incoming PreQ1, allowing a nucleophilic attack on the C1' of the ribose to form the product. After dissociation, two additional enzymatic reactions on the tRNA convert PreQ1 to queuine (Q), resulting in the hypermodified nucleoside queuosine (7-(((4,5-cis-dihydroxy-2-cyclopenten-1-yl)amino)methyl)-7-deazaguanosine). In Streptococcus thermophilus (strain ATCC BAA-250 / LMG 18311), this protein is Queuine tRNA-ribosyltransferase.